Consider the following 329-residue polypeptide: MKRQNIRTLSLIVCTLTYLLVGAAVFDALETENEILQRKLVQRVREKLKTKYNMSNADYEILEATIVKSVPHKAGYQWKFSGAFYFATTVITTIGYGHSTPMTDAGKVFCMLYALAGIPLGLIMFQSIGERMNTFAAKLLRFIRRAAGKQPIVTSSDLIIFCTGWGGLLIFGGAFMFSSYENWTYFDAVYYCFVTLTTIGFGDYVALQKRGSLQTQPEYVFFSLVFILFGLTVISAAMNLLVLRFLTMNTEDERRDEQEAILAAQGLVRVGDPTADDDFGRLPLSDNVSLASCSCYQLPDEKLRHRHRKHTEPHGGPPTFSGMTTRPKY.

Residues 1 to 8 (MKRQNIRT) lie on the Cytoplasmic side of the membrane. The chain crosses the membrane as a helical span at residues 9–29 (LSLIVCTLTYLLVGAAVFDAL). The N-linked (GlcNAc...) asparagine glycan is linked to N53. The segment at residues 80–100 (FSGAFYFATTVITTIGYGHST) is an intramembrane region (pore-forming). A Selectivity filter motif is present at residues 93-98 (TIGYGH). The helical transmembrane segment at 108-128 (VFCMLYALAGIPLGLIMFQSI) threads the bilayer. The Cytoplasmic portion of the chain corresponds to 129–157 (GERMNTFAAKLLRFIRRAAGKQPIVTSSD). Residues 158–178 (LIIFCTGWGGLLIFGGAFMFS) form a helical membrane-spanning segment. N182 is a glycosylation site (N-linked (GlcNAc...) asparagine). Positions 186-206 (FDAVYYCFVTLTTIGFGDYVA) form an intramembrane region, pore-forming. The Selectivity filter motif lies at 198 to 203 (TIGFGD). The chain crosses the membrane as a helical span at residues 220-240 (VFFSLVFILFGLTVISAAMNL). Over 241–329 (LVLRFLTMNT…FSGMTTRPKY (89 aa)) the chain is Cytoplasmic. The interval 289–296 (SLASCSCY) is may be important for regulation by and/or interaction with sup-10. The interval 307–329 (HRKHTEPHGGPPTFSGMTTRPKY) is disordered.

It belongs to the two pore domain potassium channel (TC 1.A.1.8) family. In terms of assembly, may form a complex with the regulatory subunits unc-93 and sup-10. Low levels along surface of body-wall muscle cells, in vulval and intestinal muscles and, more weakly, in anal depressor and sphincter muscles. Also expressed in a subset of head neurons.

The protein localises to the membrane. Functionally, potassium channel involved in coordination of muscle contraction. Activity is regulated by sup-18. In Caenorhabditis elegans, this protein is Two pore potassium channel protein sup-9.